The sequence spans 465 residues: Sensor histidine kinase ZraS (465 aa).

Over 1–14 (MRFMQRSKDSLAKW) the chain is Cytoplasmic. The helical transmembrane segment at 15 to 35 (LSAILPVVIVGLVGLFAVTVI) threads the bilayer. Residues 36-201 (RDYGRASEAD…ATQSGEKRNT (166 aa)) lie on the Periplasmic side of the membrane. Residues 202–222 (LIILFALATVLLASVLSFFWY) form a helical membrane-spanning segment. Over 223–465 (RRYLRSRQLL…VNITRKDPQG (243 aa)) the chain is Cytoplasmic. One can recognise a Histidine kinase domain in the interval 251-458 (GVAHEIRNPL…TFTLWLPVNI (208 aa)). The residue at position 254 (His254) is a Phosphohistidine; by autocatalysis.

In terms of processing, autophosphorylated.

The protein localises to the cell inner membrane. The enzyme catalyses ATP + protein L-histidine = ADP + protein N-phospho-L-histidine.. Its activity is regulated as follows. Activity of the ZraS/ZraR two-component system is repressed by the zinc-bound form of ZraP, which probably interacts with the periplasmic region of ZraS. In terms of biological role, part of the Zra signaling pathway, an envelope stress response (ESR) system composed of the periplasmic accessory protein ZraP, the histidine kinase ZraS and the transcriptional regulator ZraR. The ZraPSR system contributes to antibiotic resistance and is important for membrane integrity in the presence of membrane-targeting biocides. ZraS is a member of the two-component regulatory system ZraS/ZraR. Functions as a membrane-associated sensor kinase that phosphorylates ZraR in response to high concentrations of Zn(2+) or Pb(2+) in the medium. Binds one zinc molecule with high affinity via its periplasmic domain, inducing a conformational change that is transmitted to the histidine kinase domain and leads to the activation of ZraR. The system has no direct role in zinc or copper resistance. The chain is Sensor histidine kinase ZraS from Escherichia coli (strain K12).